An 80-amino-acid chain; its full sequence is U19-lycotoxin-Ls1a (80 aa).

An N-terminal signal peptide occupies residues 1–22 (MSPKVQALIFIVGLITLLAAHA). Positions 23–34 (QEELSDNTESER) are excised as a propeptide. 4 disulfides stabilise this stretch: Cys-36-Cys-50, Cys-43-Cys-55, Cys-49-Cys-66, and Cys-57-Cys-64.

The protein belongs to the neurotoxin 02 (plectoxin) family. 05 (U19-lycotoxin) subfamily. In terms of tissue distribution, expressed by the venom gland.

The protein localises to the secreted. The polypeptide is U19-lycotoxin-Ls1a (Lycosa singoriensis (Wolf spider)).